Here is a 350-residue protein sequence, read N- to C-terminus: Anthranilate phosphoribosyltransferase (350 aa).

Residues glycine 94, 97–98, threonine 102, 104–107, 122–130, and serine 134 contribute to the 5-phospho-alpha-D-ribose 1-diphosphate site; these read GD, NIST, and KHGNRSVSS. Glycine 94 provides a ligand contact to anthranilate. Mg(2+) is bound at residue serine 106. Asparagine 125 contributes to the anthranilate binding site. Residue arginine 180 participates in anthranilate binding. Aspartate 239 and glutamate 240 together coordinate Mg(2+).

The protein belongs to the anthranilate phosphoribosyltransferase family. Homodimer. Requires Mg(2+) as cofactor.

It catalyses the reaction N-(5-phospho-beta-D-ribosyl)anthranilate + diphosphate = 5-phospho-alpha-D-ribose 1-diphosphate + anthranilate. Its pathway is amino-acid biosynthesis; L-tryptophan biosynthesis; L-tryptophan from chorismate: step 2/5. Functionally, catalyzes the transfer of the phosphoribosyl group of 5-phosphorylribose-1-pyrophosphate (PRPP) to anthranilate to yield N-(5'-phosphoribosyl)-anthranilate (PRA). The sequence is that of Anthranilate phosphoribosyltransferase from Geotalea daltonii (strain DSM 22248 / JCM 15807 / FRC-32) (Geobacter daltonii).